The chain runs to 235 residues: Serine/arginine-rich splicing factor 7 (235 aa).

Residues 11 to 84 enclose the RRM domain; it reads TKVYVGNLGT…SRVRVELSTG (74 aa). The residue at position 24 (K24) is an N6-acetyllysine; alternate. Residue K24 forms a Glycyl lysine isopeptide (Lys-Gly) (interchain with G-Cter in SUMO2); alternate linkage. Residue S32 is modified to Phosphoserine. The segment at 81–98 is sufficient for interaction with NXF1; that stretch reads LSTGMPRRSRFDRPPARR. The segment at 104–120 adopts a CCHC-type zinc-finger fold; that stretch reads DRCYECGEKGHYAYDCH. A compositionally biased stretch (basic residues) spans 123–180; it reads SRRRRSRSRSRSHSRSRGRRYSRSRSRSRGRRSRSASPRRSRSVSLRRSRSASLRRSR. Residues 123 to 235 form a disordered region; it reads SRRRRSRSRS…RRSASPERVD (113 aa). 4 repeat units span residues 153–160, 161–168, 169–176, and 177–184. Residues 153-223 are 6 X 8 AA repeats of R-R-S-R-S-X-S-X; that stretch reads RRSRSASPRR…SPKRSRSPSG (71 aa). A phosphoserine mark is found at S163, S165, and S167. Residues S181, S183, S189, S191, and S193 each carry the phosphoserine modification. Basic residues predominate over residues 187-219; the sequence is SRSRSRSRSRSRSLSRPRSSRSKSRSPSPKRSR. The 5; approximate repeat unit spans residues 208–215; it reads SKSRSPSP. One copy of the 6; approximate repeat lies at 216 to 223; it reads KRSRSPSG. A phosphoserine mark is found at S228 and S230.

It belongs to the splicing factor SR family. In terms of assembly, found in large molecular weight complexes containing CCNL1 and the p110 isoforms of either CDC2L1 or CDC2L2. Interacts with CCNL2 and CPSF6. Interacts with NXF1. Interacts with YTHDC1. In terms of processing, extensively phosphorylated on serine residues in the RS domain.

It localises to the nucleus. Its subcellular location is the cytoplasm. Functionally, required for pre-mRNA splicing. Represses the splicing of MAPT/Tau exon 10. May function as export adapter involved in mRNA nuclear export such as of histone H2A. Binds mRNA which is thought to be transferred to the NXF1-NXT1 heterodimer for export (TAP/NXF1 pathway); enhances NXF1-NXT1 RNA-binding activity. RNA-binding is semi-sequence specific. The protein is Serine/arginine-rich splicing factor 7 (SRSF7) of Bos taurus (Bovine).